We begin with the raw amino-acid sequence, 122 residues long: Ribonuclease P protein component (122 aa).

Belongs to the RnpA family. Consists of a catalytic RNA component (M1 or rnpB) and a protein subunit.

It catalyses the reaction Endonucleolytic cleavage of RNA, removing 5'-extranucleotides from tRNA precursor.. In terms of biological role, RNaseP catalyzes the removal of the 5'-leader sequence from pre-tRNA to produce the mature 5'-terminus. It can also cleave other RNA substrates such as 4.5S RNA. The protein component plays an auxiliary but essential role in vivo by binding to the 5'-leader sequence and broadening the substrate specificity of the ribozyme. This chain is Ribonuclease P protein component, found in Lactobacillus johnsonii (strain CNCM I-12250 / La1 / NCC 533).